Consider the following 152-residue polypeptide: Ribonuclease HI (152 aa).

Residues 1–142 (MDSKVVIYTD…ADKLAVQGRE (142 aa)) enclose the RNase H type-1 domain. Residues D10, E48, D70, and D134 each coordinate Mg(2+).

Belongs to the RNase H family. As to quaternary structure, monomer. The cofactor is Mg(2+).

Its subcellular location is the cytoplasm. The enzyme catalyses Endonucleolytic cleavage to 5'-phosphomonoester.. In terms of biological role, endonuclease that specifically degrades the RNA of RNA-DNA hybrids. In Rickettsia conorii (strain ATCC VR-613 / Malish 7), this protein is Ribonuclease HI.